The chain runs to 195 residues: Imidazoleglycerol-phosphate dehydratase (195 aa).

This sequence belongs to the imidazoleglycerol-phosphate dehydratase family.

The protein localises to the cytoplasm. The enzyme catalyses D-erythro-1-(imidazol-4-yl)glycerol 3-phosphate = 3-(imidazol-4-yl)-2-oxopropyl phosphate + H2O. The protein operates within amino-acid biosynthesis; L-histidine biosynthesis; L-histidine from 5-phospho-alpha-D-ribose 1-diphosphate: step 6/9. The sequence is that of Imidazoleglycerol-phosphate dehydratase from Pelotomaculum thermopropionicum (strain DSM 13744 / JCM 10971 / SI).